The primary structure comprises 78 residues: Large ribosomal subunit protein uL24 (78 aa).

Belongs to the universal ribosomal protein uL24 family. Part of the 50S ribosomal subunit.

In terms of biological role, one of two assembly initiator proteins, it binds directly to the 5'-end of the 23S rRNA, where it nucleates assembly of the 50S subunit. Its function is as follows. One of the proteins that surrounds the polypeptide exit tunnel on the outside of the subunit. This Helicobacter hepaticus (strain ATCC 51449 / 3B1) protein is Large ribosomal subunit protein uL24.